Consider the following 626-residue polypeptide: tRNA uridine 5-carboxymethylaminomethyl modification enzyme MnmG (626 aa).

13–18 is a binding site for FAD; it reads GGGHAG. 273–287 serves as a coordination point for NAD(+); the sequence is GPRYCPSIEDKIHRF.

The protein belongs to the MnmG family. In terms of assembly, homodimer. Heterotetramer of two MnmE and two MnmG subunits. It depends on FAD as a cofactor.

It is found in the cytoplasm. Functionally, NAD-binding protein involved in the addition of a carboxymethylaminomethyl (cmnm) group at the wobble position (U34) of certain tRNAs, forming tRNA-cmnm(5)s(2)U34. The polypeptide is tRNA uridine 5-carboxymethylaminomethyl modification enzyme MnmG (Acinetobacter baumannii (strain ATCC 17978 / DSM 105126 / CIP 53.77 / LMG 1025 / NCDC KC755 / 5377)).